We begin with the raw amino-acid sequence, 349 residues long: UPF0324 inner membrane protein YeiH (349 aa).

Topologically, residues 1–12 (MTNITLQKQHRT) are periplasmic. Residues 13-32 (LWHFIPGLALSAVITGVALW) form a helical membrane-spanning segment. Over 33–35 (GGS) the chain is Cytoplasmic. Residues 36–58 (IPAVAGAGFSALTLAILLGMVLG) form a helical membrane-spanning segment. The Periplasmic portion of the chain corresponds to 59-99 (NTIYPHIWKSCDGGVLFAKQYLLRLGIILYGFRLTFSQIAD). Residues 100 to 122 (VGISGIIIDVLTLSSTFLLACFL) form a helical membrane-spanning segment. Over 123-131 (GQKVFGLDK) the chain is Cytoplasmic. Residues 132–151 (HTSWLIGAGSSICGAAAVLA) form a helical membrane-spanning segment. At 152-162 (TEPVVKAEASK) the chain is on the periplasmic side. The chain crosses the membrane as a helical span at residues 163-185 (VTVAVATVVIFGTVAIFLYPAIY). Residues 186–261 (PLMSQWFSPE…SGTNSGEKSK (76 aa)) lie on the Cytoplasmic side of the membrane. The helical transmembrane segment at 262–283 (ITIPWFAILFIVVAIFNSFHLL) threads the bilayer. Over 284 to 289 (PQSVVN) the chain is Periplasmic. Residues 290–312 (MLVTLDTFLLAMAMAALGLTTHV) form a helical membrane-spanning segment. Residues 313-321 (SALKKAGAK) are Cytoplasmic-facing. A helical transmembrane segment spans residues 322–344 (PLLMALVLFAWLIVGGGAINYVI). The Periplasmic portion of the chain corresponds to 345-349 (QSVIA).

The protein belongs to the UPF0324 family.

The protein localises to the cell inner membrane. The sequence is that of UPF0324 inner membrane protein YeiH (yeiH) from Escherichia coli O6:H1 (strain CFT073 / ATCC 700928 / UPEC).